Reading from the N-terminus, the 449-residue chain is GTPase Der (449 aa).

EngA-type G domains lie at 3-167 (AVIA…PTSE) and 178-351 (PRIA…IDSR). Residues 9-16 (GRPNVGKS), 56-60 (DTGGF), 119-122 (NKMD), 184-191 (GRPNVGKS), 231-235 (DTAGM), and 296-299 (NKWD) contribute to the GTP site. The KH-like domain occupies 352–436 (RHFSTAELNR…PLRLVFRQGE (85 aa)).

It belongs to the TRAFAC class TrmE-Era-EngA-EngB-Septin-like GTPase superfamily. EngA (Der) GTPase family. In terms of assembly, associates with the 50S ribosomal subunit.

GTPase that plays an essential role in the late steps of ribosome biogenesis. This is GTPase Der from Acidithiobacillus ferrooxidans (strain ATCC 23270 / DSM 14882 / CIP 104768 / NCIMB 8455) (Ferrobacillus ferrooxidans (strain ATCC 23270)).